The following is a 324-amino-acid chain: Phospho-N-acetylmuramoyl-pentapeptide-transferase (324 aa).

A run of 10 helical transmembrane segments spans residues 5–25 (GLLVTAGVAFLISVALSPLFI), 52–72 (PTMGGIVIYVSMMVTTLIMAI), 77–97 (LGAEVSLLLLVTFGYGLIGFL), 122–142 (VIAIAFFLIGKGQAFHTYIMI), 149–169 (FELGWAYFVLVLFMLIGGSNA), 176–196 (LDGLLSGTAAIAFGAFSIIAV), 201–221 (FGVAIFCMAVVGAVLGFLVFN), 227–247 (VFMGDTGSLALGGAIAAVAIL), 253–273 (LLVIIGGVFVAETLSVIIQVI), and 302–322 (VVVTFWSVGFLLAVLGIYIGV).

This sequence belongs to the glycosyltransferase 4 family. MraY subfamily. It depends on Mg(2+) as a cofactor.

Its subcellular location is the cell membrane. It carries out the reaction UDP-N-acetyl-alpha-D-muramoyl-L-alanyl-gamma-D-glutamyl-meso-2,6-diaminopimeloyl-D-alanyl-D-alanine + di-trans,octa-cis-undecaprenyl phosphate = di-trans,octa-cis-undecaprenyl diphospho-N-acetyl-alpha-D-muramoyl-L-alanyl-D-glutamyl-meso-2,6-diaminopimeloyl-D-alanyl-D-alanine + UMP. Its pathway is cell wall biogenesis; peptidoglycan biosynthesis. Catalyzes the initial step of the lipid cycle reactions in the biosynthesis of the cell wall peptidoglycan: transfers peptidoglycan precursor phospho-MurNAc-pentapeptide from UDP-MurNAc-pentapeptide onto the lipid carrier undecaprenyl phosphate, yielding undecaprenyl-pyrophosphoryl-MurNAc-pentapeptide, known as lipid I. The chain is Phospho-N-acetylmuramoyl-pentapeptide-transferase from Bacillus mycoides (strain KBAB4) (Bacillus weihenstephanensis).